We begin with the raw amino-acid sequence, 448 residues long: Tryptamine benzoyltransferase 2 (448 aa).

The disordered stretch occupies residues 1–20 (MEITSSAMLKPAPTPTPHPL). Active-site proton acceptor residues include H155 and D386.

It belongs to the plant acyltransferase family.

Functionally, hydroxycinnamoyl transferase that catalyzes the transfer of an acyl from benzoyl-CoA to tryptamine, to produce benzoyl tryptamine. Serotonin and tyramine serve as acyl acceptors in vitro. Specific for benzoyl-CoA as acyl donor. Has no activity with p-coumaroyl-CoA, caffeoyl-CoA, or feruloyl-CoA as acyl donors. This Oryza sativa subsp. japonica (Rice) protein is Tryptamine benzoyltransferase 2.